Here is a 412-residue protein sequence, read N- to C-terminus: CinA-like protein (412 aa).

It belongs to the CinA family.

This is CinA-like protein from Kosmotoga olearia (strain ATCC BAA-1733 / DSM 21960 / TBF 19.5.1).